We begin with the raw amino-acid sequence, 133 residues long: Interleukin-5 (133 aa).

Residues M1–A20 form the signal peptide. Residues N46, N75, and N89 are each glycosylated (N-linked (GlcNAc...) asparagine).

Belongs to the IL-5 family. As to quaternary structure, homodimer; disulfide-linked. Interacts with IL5RA. Interacts with CSF2RB. In terms of tissue distribution, expressed in lymphoid cells, including spleen, thymus, lymph nodes and peripheral blood mononuclear cells.

The protein localises to the secreted. In terms of biological role, homodimeric cytokine expressed predominantly by T-lymphocytes and NK cells that plays an important role in the survival, differentiation, and chemotaxis of eosinophils. Also acts on activated and resting B-cells to induce immunoglobulin production, growth, and differentiation. Mechanistically, exerts its biological effects through a receptor composed of IL5RA subunit and the cytokine receptor common subunit beta/CSF2RB. Binding to the receptor leads to activation of various kinases including LYN, SYK and JAK2 and thereby propagates signals through the RAS-MAPK and JAK-STAT5 pathways respectively. In Mus musculus (Mouse), this protein is Interleukin-5 (Il5).